The primary structure comprises 401 residues: Stearoyl-[acyl-carrier-protein] 9-desaturase 3, chloroplastic (401 aa).

Residues 1–31 (MSMALLLTSPAMKQKPAVITSPRRGSSPSRR) form a disordered region. The transit peptide at 1 to 35 (MSMALLLTSPAMKQKPAVITSPRRGSSPSRRLRVS) directs the protein to the chloroplast. Fe cation contacts are provided by glutamate 140, glutamate 178, histidine 181, glutamate 231, glutamate 264, and histidine 267.

The protein belongs to the fatty acid desaturase type 2 family. Homodimer. The cofactor is Fe(2+). As to expression, ubiquitously expressed with a preference in leaves, flowers and stems.

It localises to the plastid. The protein resides in the chloroplast. The catalysed reaction is octadecanoyl-[ACP] + 2 reduced [2Fe-2S]-[ferredoxin] + O2 + 2 H(+) = (9Z)-octadecenoyl-[ACP] + 2 oxidized [2Fe-2S]-[ferredoxin] + 2 H2O. It participates in lipid metabolism; fatty acid metabolism. Converts stearoyl-ACP to oleoyl-ACP by introduction of a cis double bond between carbons 9 and 10 of the acyl chain. Also able to convert palmitoyl-ACP to palmitoleoyl-ACP at the C9 position. Exhibits delta-9 palmitoyl-[acyl-carrier-protein] desaturase (PAD) activity. Involved in omega-7 monounsaturated fatty acid biosynthesis, especially in the endosperm oil. The polypeptide is Stearoyl-[acyl-carrier-protein] 9-desaturase 3, chloroplastic (S-ACP-DES3) (Arabidopsis thaliana (Mouse-ear cress)).